Consider the following 69-residue polypeptide: Putative defensin-like protein 312 (69 aa).

The first 19 residues, 1–19, serve as a signal peptide directing secretion; the sequence is MSCFSFLVYFLLFIVTKMS. Residues Cys45 and Cys57 are joined by a disulfide bond.

This sequence belongs to the DEFL family.

The protein resides in the secreted. The sequence is that of Putative defensin-like protein 312 from Arabidopsis thaliana (Mouse-ear cress).